We begin with the raw amino-acid sequence, 100 residues long: Small ribosomal subunit protein uS14 (100 aa).

It belongs to the universal ribosomal protein uS14 family. As to quaternary structure, part of the 30S ribosomal subunit. Contacts proteins S3 and S10.

Functionally, binds 16S rRNA, required for the assembly of 30S particles and may also be responsible for determining the conformation of the 16S rRNA at the A site. The protein is Small ribosomal subunit protein uS14 of Picosynechococcus sp. (strain ATCC 27264 / PCC 7002 / PR-6) (Agmenellum quadruplicatum).